A 2013-amino-acid polypeptide reads, in one-letter code: Centrosomal protein 224 (2013 aa).

HEAT repeat units follow at residues 115-153 (TIEADSAEPVVEALLKGTSSTSPKILLASLAALTQALKT), 158-196 (QIPVKLILKQFSPWFENRDKGIRDQASELFIEIYRWIGK), 200-238 (PLISEALTPIQLKALQDQFEKLPTDPAVPLKYTRSEAAK), 348-386 (TSYVKPFITPILEKFKEKKTSVLQSVHTTMDSLVGKSIS), and 427-465 (TKVTKQLTKIFMEALNDTDSNIRDNASKAFAALGGIIGE). The interval 512–557 (PVSSSNKKPAAATGNSKSSSTTTPTGRSSNSSPLPPPPSSSDDIKN) is disordered. Residues 524-543 (TGNSKSSSTTTPTGRSSNSS) show a composition bias toward low complexity. 5 HEAT repeats span residues 724–762 (IQQLKPLLDYTKQCLESTNPDVKKSAIKLLCTIKINIGA), 816–854 (VDISVKLTPAIITNLSDANWKTRSDALDEIERIIIDANR), 857–895 (QPKLGGLIPALKNRLTDNNQKCTITTLNIIGMLSQAMGG), 899–937 (EKHARLLIPGILLLLGDSKKPVRDAVISCMNVIVQSDLG), and 977–1015 (PSEINTLAKGIISCLQDKSAEIRSLADNLLSILCTQIPL). The disordered stretch occupies residues 1043 to 1109 (KTGQPIPPPS…QQQQRRSILQ (67 aa)). The span at 1053–1106 (KTKQSTSSSSSSSSTTSQQSSTPSSPQPIRQQQQQQQQQPTQPQQQQQQQQRRS) shows a compositional bias: low complexity. HEAT repeat units lie at residues 1240–1279 (EYEASCLVPILLEKSGSATNEQIKQIFKQSIQQLEELCLP), 1281–1314 (VLFRFAIEMVTSQNWRTRVEVLNVMASIIDKNGA), and 1317–1353 (CGNLKVVIPLITQNLNDSQSKQSSLLCLNKLYSHIKD). Composition is skewed to low complexity over residues 1372 to 1406 (NNNNNNNNNNNNNNNNNNNNVQQQQQQQQQQQQQQ), 1695 to 1735 (NRIS…INSS), and 1746 to 1796 (SNNT…TLST). Disordered regions lie at residues 1372–1413 (NNNN…SLST), 1695–1809 (NRIS…YSGK), 1905–1949 (NQPS…IAPQ), and 1966–1995 (TLNPDQNSGSNNNNSHQNSPSTSSSNDLNS). Residues 1799 to 1809 (INKEPRDYSGK) show a composition bias toward basic and acidic residues. Over residues 1913–1939 (NNNNNNNNNNNNNNNNNINNNNNNNNN) the composition is skewed to low complexity. Over residues 1940-1949 (SGGNENIAPQ) the composition is skewed to polar residues. Residues 1967–1995 (LNPDQNSGSNNNNSHQNSPSTSSSNDLNS) show a composition bias toward low complexity.

The protein belongs to the TOG/XMAP215 family. As to quaternary structure, interacts with eb1 at the microtubule tip, centrosome and kinetochore. Interacts with lis1 in the cortical attachment of microtubules.

It is found in the cytoplasm. The protein resides in the cytoskeleton. It localises to the microtubule organizing center. Its subcellular location is the centrosome. The protein localises to the chromosome. It is found in the centromere. The protein resides in the kinetochore. Its function is as follows. Involved in regulation of microtubule dynamics. Regulates the interaction of microtubules tips with the centrosome and cell cortex. This is Centrosomal protein 224 (mtaA) from Dictyostelium discoideum (Social amoeba).